The sequence spans 589 residues: Inactive poly [ADP-ribose] polymerase RCD1 (589 aa).

In terms of domain architecture, WWE spans 64–153; the sequence is KLSAYENRSG…ETGAKTPLAW (90 aa). A PARP catalytic domain is found at 248-469; that stretch reads EAAVSKWDET…LIAKRDNSGV (222 aa). Disordered regions lie at residues 464–504 and 569–589; these read RDNS…TRPK and QPKSKEIPGSIRDHEEGAGGL. The segment covering 481–503 has biased composition (polar residues); that stretch reads LESNQGARGSGSANSVGSSTTRP. Residues 501 to 572 enclose the RST domain; sequence TRPKSPWMPF…ITTLQNQPKS (72 aa). Basic and acidic residues predominate over residues 571-589; it reads KSKEIPGSIRDHEEGAGGL.

Interacts with the transcription factors NAC013/NTL1 and NAC046. Interacts with dehydration-responsive DREB2 proteins and a number of transcription factors belonging to several protein families. Interacts with turnip crinkle virus (TCV) movement protein P8. As to expression, expressed in young developing tissues, such as young leaves and flowers and root tips. In mature plants, expressed in vasculature of leaves and roots, and guard cells.

It localises to the nucleus matrix. Functionally, inactive ADP-ribosyltransferase that functions with SRO1 to regulate oxidative stress, hormonal and developmental responses. Required for embryogenesis, vegetative and reproductive development, and abiotic stress responses. May regulate several stress-responsive genes. Seems to play a larger developmental role than SRO1. Does not bind NAD in vitro. The protein is Inactive poly [ADP-ribose] polymerase RCD1 (RCD1) of Arabidopsis thaliana (Mouse-ear cress).